Reading from the N-terminus, the 958-residue chain is Glycine dehydrogenase (decarboxylating) (958 aa).

An N6-(pyridoxal phosphate)lysine modification is found at Lys-703.

Belongs to the GcvP family. The glycine cleavage system is composed of four proteins: P, T, L and H. The cofactor is pyridoxal 5'-phosphate.

The enzyme catalyses N(6)-[(R)-lipoyl]-L-lysyl-[glycine-cleavage complex H protein] + glycine + H(+) = N(6)-[(R)-S(8)-aminomethyldihydrolipoyl]-L-lysyl-[glycine-cleavage complex H protein] + CO2. The glycine cleavage system catalyzes the degradation of glycine. The P protein binds the alpha-amino group of glycine through its pyridoxal phosphate cofactor; CO(2) is released and the remaining methylamine moiety is then transferred to the lipoamide cofactor of the H protein. The sequence is that of Glycine dehydrogenase (decarboxylating) from Nitrobacter hamburgensis (strain DSM 10229 / NCIMB 13809 / X14).